Consider the following 486-residue polypeptide: MTDTATRPVASDSVAGVGRIVRVTGPVVDIEFPHDSIPPVYNALKTTITIGEDSTEITLEIALHLGDDVVRAIALKPTDGLVRGQEVRDTGAAISVPVGDITKGKVFNVTGDILNNEGGEPIEITERWPIHRKPPMFDQLESKTQLFETGIKVIDLLTPYVQGGKIGLFGGAGVGKTVLIQEMIQRVAQDHGGVSVFAGVGERTREGNDLIMEMEEAGVFDKTALVFGQMDEPPGTRLRVALSALTMAEYFRDVKNQDVLLFIDNIFRFTQAGSEVSTLLGRMPSAVGYQPNLADEMGVLQERITSTRGHSITSLQAIYVPADDYTDPAPATTFAHLDATTELSREIASRGLYPAVDPLTSTSRILDPRYLGQAHYDTATRVKAILQKNKELQEIIAILGVDELSEEDKVTVSRARRIQQFLSQNTYMAKKFTGVEGSTVPLKNTIESFSKIADGDYDHVAEQAFFNVGDLDDVERRWSEIQKENG.

Residue 170 to 177 participates in ATP binding; that stretch reads GGAGVGKT.

This sequence belongs to the ATPase alpha/beta chains family. As to quaternary structure, F-type ATPases have 2 components, CF(1) - the catalytic core - and CF(0) - the membrane proton channel. CF(1) has five subunits: alpha(3), beta(3), gamma(1), delta(1), epsilon(1). CF(0) has three main subunits: a(1), b(2) and c(9-12). The alpha and beta chains form an alternating ring which encloses part of the gamma chain. CF(1) is attached to CF(0) by a central stalk formed by the gamma and epsilon chains, while a peripheral stalk is formed by the delta and b chains.

Its subcellular location is the cell membrane. It carries out the reaction ATP + H2O + 4 H(+)(in) = ADP + phosphate + 5 H(+)(out). Functionally, produces ATP from ADP in the presence of a proton gradient across the membrane. The catalytic sites are hosted primarily by the beta subunits. This chain is ATP synthase subunit beta, found in Clavibacter sepedonicus (Clavibacter michiganensis subsp. sepedonicus).